The primary structure comprises 225 residues: THAP domain-containing protein 1 B (225 aa).

The THAP-type zinc finger occupies 5–57 (CSAYGCKNRYDKDRPISFHKFPLKRPLLCKKWEAAVRRADFKPTKYSSICSDH). A coiled-coil region spans residues 139-194 (VEDTVHQRRRIQQLEEQVDKLRKKLKIANQKCRRQERSLEKLEKEVSEYREAKGSG).

It belongs to the THAP1 family.

It is found in the nucleus. Its subcellular location is the nucleoplasm. DNA-binding transcription regulator that regulates endothelial cell proliferation and G1/S cell-cycle progression. Specifically binds the 5'-[AT]NTNN[GT]GGCA[AGT]-3' core DNA sequence and acts by modulating expression of pRB-E2F cell-cycle target genes. The sequence is that of THAP domain-containing protein 1 B (thap1-b) from Xenopus laevis (African clawed frog).